The primary structure comprises 352 residues: Blue-sensitive opsin (352 aa).

Residues 1–42 (MRGNRLVEFPDDFWIPIPLDTNNVTALSPFLVPQDHLGSPTI) lie on the Extracellular side of the membrane. N23 carries an N-linked (GlcNAc...) asparagine glycan. A helical membrane pass occupies residues 43–67 (FYSMSALMFVLFVAGTAINLLTIAC). Residues 68-79 (TLQYKKLRSHLN) lie on the Cytoplasmic side of the membrane. Residues 80 to 105 (YILVNMAVANLIVASTGSSTCFVCFA) traverse the membrane as a helical segment. Residues 106–119 (FKYMVLGPLGCKIE) are Extracellular-facing. The cysteines at positions 116 and 193 are disulfide-linked. A helical transmembrane segment spans residues 120-139 (GFTAALGGMVSLWSLAVIAF). The Cytoplasmic portion of the chain corresponds to 140-158 (ERWLVICKPLGNFVFKSEH). The helical transmembrane segment at 159 to 182 (ALLCCALTWVCGLCASVPPLVGWS) threads the bilayer. Residues 183 to 208 (RYIPEGMQCSCGPDWYTTGNKFNNES) lie on the Extracellular side of the membrane. The N-linked (GlcNAc...) asparagine glycan is linked to N206. A helical membrane pass occupies residues 209–236 (FVMFLFCFCFAVPFSIIVFCYSQLLFTL). Topologically, residues 237–258 (KMAAKAQADSASTQKAEKEVTR) are cytoplasmic. A helical membrane pass occupies residues 259-282 (MVVVMVVAFLVCYVPYASFALWVI). The Extracellular segment spans residues 283 to 290 (NNRGQTFD). The helical transmembrane segment at 291-315 (LRLATIPSCVSKASTVYNPVIYVLL) threads the bilayer. Position 302 is an N6-(retinylidene)lysine (K302). The Cytoplasmic segment spans residues 316 to 352 (NKQFRLCMKKMLGMSADEDEESSTSQSTTEVSKVGPS). The tract at residues 332 to 352 (DEDEESSTSQSTTEVSKVGPS) is disordered.

Belongs to the G-protein coupled receptor 1 family. Opsin subfamily. Phosphorylated on some or all of the serine and threonine residues present in the C-terminal region. As to expression, the color pigments are found in the cone photoreceptor cells.

Its subcellular location is the membrane. In terms of biological role, visual pigments are the light-absorbing molecules that mediate vision. They consist of an apoprotein, opsin, covalently linked to cis-retinal. This Oryzias latipes (Japanese rice fish) protein is Blue-sensitive opsin.